A 209-amino-acid chain; its full sequence is Urease accessory protein UreG (209 aa).

16-23 (GPVGSGKT) serves as a coordination point for GTP.

Belongs to the SIMIBI class G3E GTPase family. UreG subfamily. Homodimer. UreD, UreF and UreG form a complex that acts as a GTP-hydrolysis-dependent molecular chaperone, activating the urease apoprotein by helping to assemble the nickel containing metallocenter of UreC. The UreE protein probably delivers the nickel.

The protein resides in the cytoplasm. Functionally, facilitates the functional incorporation of the urease nickel metallocenter. This process requires GTP hydrolysis, probably effectuated by UreG. This chain is Urease accessory protein UreG, found in Blochmanniella floridana.